The chain runs to 1065 residues: WD repeat-containing protein on Y chromosome (1065 aa).

WD repeat units lie at residues 153–197 (EEVT…IRTA), 326–365 (RVPLGVSTFFVAESHNIVVTGGPDTFVRIWDVYIPTEPSA), 369–408 (GHNGGIVMVFVQPEENKVYSVDYQKIIKVWDLQEHTLLQT), 459–498 (THAAPVSVVLYNRLFRNIVTCGLDSYIIVWDPWSGRRKII), 511–550 (IIDIEITAATFDPLEQFLLTGARDGTLKIWNYNNAVVVRN), 598–638 (FHTD…RRYS), 745–784 (KTGDCVLTMCTDRKNRYIYTGTAFGYIKVWHIVNYCVPEA), and 828–867 (AHLKAINSIAFINLPKIVFSGSHDYSCRLWTQGGRYLGTL). Over residues 915–925 (PAKRAEVKAPE) the composition is skewed to basic and acidic residues. Disordered regions lie at residues 915-936 (PAKRAEVKAPEDRDEETAQTDD) and 1024-1065 (GSAL…QQSE). Positions 926-936 (DRDEETAQTDD) are enriched in acidic residues.

In Drosophila persimilis (Fruit fly), this protein is WD repeat-containing protein on Y chromosome.